The following is a 787-amino-acid chain: MKQPTLIRPRLRHRRSTPAAATKMCPKRHWLVNNRAAGSRGSGGAAARSRRSLDQIVEVLVALIVVNCLATAAAALITPPDSLESLGSLGIPSSSASSSEDDDDMSSGFYRIPHRLEGYPQLQQLQRGQNFKISPKPCSFGRVEGTCMFVWECIKSEGKHVGMCVDSFMFGSCCTHNYTDNIVLPQTAFSYTRPTKPLTLRPRPPAAPYKPMISGMTTIERPHGAGTLVIRPSGPHHQGTLARPHPPPYQSKPTTASDLHGSASHPSSSSSSSSSSNPNSIWHTSTQQQQQQQHQQNQQNHWQMTTEPSFITKPRPTGWTKPGIVNLPMPARPSKPSKPTKKPIVYDRTPPPPPSVPPSTSTSTTSTSLIWPAQTHPPQPHRPTRPQLSPGTSLAASSSSHWPSSTTSTTSSTTSTTTTTTTTRRTTTPTTTTRRTTTNKPTRPYQRPTTATSSSSTSTTSSKTPTTTRPISSSSSSSSGIVTSSQRPTQPTHRTPVLATSGIETNEISDSSIPDAGALGHVKTISAARSECGVPTLARPETRIVGGKSAAFGRWPWQVSVRRTSFFGFSSTHRCGGALINENWIATAGHCVDDLLISQIRIRVGEYDFSHVQEQLPYIERGVAKKVVHPKYSFLTYEYDLALVKLEQPLEFAPHVSPICLPETDSLLIGMNATVTGWGRLSEGGTLPSVLQEVSVPIVSNDNCKSMFMRAGRQEFIPDIFLCAGYETGGQDSCQGDSGGPLQAKSQDGRFFLAGIISWGIGCAEANLPGVCTRISKFTPWILEHVR.

Residues 1–22 (MKQPTLIRPRLRHRRSTPAAAT) form a disordered region. Over 1–58 (MKQPTLIRPRLRHRRSTPAAATKMCPKRHWLVNNRAAGSRGSGGAAARSRRSLDQIVE) the chain is Cytoplasmic. A helical; Signal-anchor for type II membrane protein membrane pass occupies residues 59–80 (VLVALIVVNCLATAAAALITPP). The Extracellular segment spans residues 81-787 (DSLESLGSLG…FTPWILEHVR (707 aa)). Asn-177 is a glycosylation site (N-linked (GlcNAc...) asparagine). Residues 225-516 (AGTLVIRPSG…EISDSSIPDA (292 aa)) form a disordered region. Low complexity-rich tracts occupy residues 262–280 (SASHPSSSSSSSSSSNPNS), 287–303 (QQQQQQQHQQNQQNHWQ), 358–368 (PSTSTSTTSTS), 393–438 (SLAA…RTTT), and 449–485 (TTATSSSSTSTTSSKTPTTTRPISSSSSSSSGIVTSS). Positions 502 to 512 (GIETNEISDSS) are enriched in polar residues. 2 disulfides stabilise this stretch: Cys-532/Cys-660 and Cys-575/Cys-591. A Peptidase S1 domain is found at 544 to 787 (IVGGKSAAFG…FTPWILEHVR (244 aa)). Catalysis depends on charge relay system residues His-590 and Asp-640. Asn-672 carries N-linked (GlcNAc...) asparagine glycosylation. 2 disulfides stabilise this stretch: Cys-704–Cys-723 and Cys-734–Cys-763. The active-site Charge relay system is Ser-738.

Belongs to the peptidase S1 family. Post-translationally, may activate itself by proteolytic cleavage.

The protein localises to the membrane. Its function is as follows. Hormone dependent protease required for epithelial morphogenesis, including the formation of bristles, legs, and wings. Has a dual function, detaches imaginal disk cells from extracellular matrices through its extracellular proteolytic domain and transmits an outside-to-inside signal to its intracellular domain to modify the cytoskeleton during morphogenesis. In Drosophila melanogaster (Fruit fly), this protein is Serine proteinase stubble (Sb).